The sequence spans 470 residues: Cysteine--tRNA ligase (470 aa).

C27 is a Zn(2+) binding site. Positions 29–39 (PTVYNYIHIGN) match the 'HIGH' region motif. 3 residues coordinate Zn(2+): C207, H232, and E236. The 'KMSKS' region signature appears at 264 to 268 (KMSKS). K267 provides a ligand contact to ATP.

This sequence belongs to the class-I aminoacyl-tRNA synthetase family. In terms of assembly, monomer. The cofactor is Zn(2+).

The protein localises to the cytoplasm. It catalyses the reaction tRNA(Cys) + L-cysteine + ATP = L-cysteinyl-tRNA(Cys) + AMP + diphosphate. The chain is Cysteine--tRNA ligase from Lachnoclostridium phytofermentans (strain ATCC 700394 / DSM 18823 / ISDg) (Clostridium phytofermentans).